The primary structure comprises 237 residues: 1-(5-phosphoribosyl)-5-[(5-phosphoribosylamino)methylideneamino] imidazole-4-carboxamide isomerase (237 aa).

The active-site Proton acceptor is D8. Residue D130 is the Proton donor of the active site.

The protein belongs to the HisA/HisF family.

It is found in the cytoplasm. It carries out the reaction 1-(5-phospho-beta-D-ribosyl)-5-[(5-phospho-beta-D-ribosylamino)methylideneamino]imidazole-4-carboxamide = 5-[(5-phospho-1-deoxy-D-ribulos-1-ylimino)methylamino]-1-(5-phospho-beta-D-ribosyl)imidazole-4-carboxamide. It participates in amino-acid biosynthesis; L-histidine biosynthesis; L-histidine from 5-phospho-alpha-D-ribose 1-diphosphate: step 4/9. The polypeptide is 1-(5-phosphoribosyl)-5-[(5-phosphoribosylamino)methylideneamino] imidazole-4-carboxamide isomerase (Halothermothrix orenii (strain H 168 / OCM 544 / DSM 9562)).